A 153-amino-acid polypeptide reads, in one-letter code: FAD synthase (153 aa).

ATP-binding positions include 9 to 10 (TF), 14 to 17 (HPGH), Asp97, and Tyr124.

The protein belongs to the archaeal FAD synthase family. Homodimer. A divalent metal cation serves as cofactor.

It carries out the reaction FMN + ATP + H(+) = FAD + diphosphate. It participates in cofactor biosynthesis; FAD biosynthesis; FAD from FMN: step 1/1. In terms of biological role, catalyzes the transfer of the AMP portion of ATP to flavin mononucleotide (FMN) to produce flavin adenine dinucleotide (FAD) coenzyme. In Methanobrevibacter smithii (strain ATCC 35061 / DSM 861 / OCM 144 / PS), this protein is FAD synthase.